We begin with the raw amino-acid sequence, 476 residues long: Angiotensinogen (476 aa).

An N-terminal signal peptide occupies residues 1 to 24 (MAPAGVSLRATILCLLAWAGLAAG). D25 carries the beta-decarboxylated aspartate; in form angiotensin-A modification. N38, N161, N295, and N319 each carry an N-linked (GlcNAc...) asparagine glycan. A disulfide bridge connects residues C42 and C162.

The protein belongs to the serpin family. In terms of assembly, during pregnancy, exists as a disulfide-linked 2:2 heterotetramer with the proform of PRG2 and as a complex (probably a 2:2:2 heterohexamer) with pro-PRG2 and C3dg. In terms of processing, beta-decarboxylation of Asp-25 in angiotensin-2, by mononuclear leukocytes produces alanine. The resulting peptide form, angiotensin-A, has the same affinity for the AT1 receptor as angiotensin-2, but a higher affinity for the AT2 receptor. In response to low blood pressure, the enzyme renin/REN cleaves angiotensinogen to produce angiotensin-1. Angiotensin-1 is a substrate of ACE (angiotensin converting enzyme) that removes a dipeptide to yield the physiologically active peptide angiotensin-2. Angiotensin-1 and angiotensin-2 can be further processed to generate angiotensin-3, angiotensin-4. Angiotensin 1-9 is cleaved from angiotensin-1 by ACE2 and can be further processed by ACE to produce angiotensin 1-7, angiotensin 1-5 and angiotensin 1-4. Angiotensin 1-7 has also been proposed to be cleaved from angiotensin-2 by ACE2 or from angiotensin-1 by MME (neprilysin). Post-translationally, the disulfide bond is labile. Angiotensinogen is present in the circulation in a near 40:60 ratio with the oxidized disulfide-bonded form, which preferentially interacts with receptor-bound renin. Expressed by the liver and secreted in plasma.

The protein localises to the secreted. In terms of biological role, essential component of the renin-angiotensin system (RAS), a potent regulator of blood pressure, body fluid and electrolyte homeostasis. Its function is as follows. Acts directly on vascular smooth muscle as a potent vasoconstrictor, affects cardiac contractility and heart rate through its action on the sympathetic nervous system, and alters renal sodium and water absorption through its ability to stimulate the zona glomerulosa cells of the adrenal cortex to synthesize and secrete aldosterone. Acts by binding to angiotensin receptors AGTR1 and AGTR2. Also binds the DEAR/FBXW7-AS1 receptor. Stimulates aldosterone release. Functionally, is a ligand for the G-protein coupled receptor MAS1. Has vasodilator and antidiuretic effects. Has an antithrombotic effect that involves MAS1-mediated release of nitric oxide from platelets. This chain is Angiotensinogen, found in Homo sapiens (Human).